A 343-amino-acid polypeptide reads, in one-letter code: Probable siderophore transport system permease protein YfhA (343 aa).

Transmembrane regions (helical) follow at residues 15-35 (WIVFLVLLGLTAAVLIISAGL), 69-89 (ILTALCAGVCLAAAGAILQGL), 97-117 (PDIIGITGGAAVAVVLLMMFF), 130-150 (WLPAAAFIGASAVGLIVYLLA), 160-180 (LVLIGIGFSMSAQAMTTLLMI), 204-224 (QHVKIAIILSVILLFICFVAL), 249-269 (FFLLLLSTALTGCAVSVAGTI), 289-309 (GALLPASALIGALLVLTADIV), and 317-337 (VEVPAGVFTAAIGAPYFIYLL).

This sequence belongs to the binding-protein-dependent transport system permease family. FecCD subfamily. In terms of assembly, the complex is composed of one ATP-binding protein (YusV), two transmembrane proteins (YfiZ and YfhA) and a solute-binding protein (YfiY).

The protein localises to the cell membrane. Functionally, part of the ABC transporter complex YfiYZ/YfhA/YusV involved in import of the iron-hydroxamate siderophores schizokinen, arthrobactin and corprogen. The protein is Probable siderophore transport system permease protein YfhA (yfhA) of Bacillus subtilis (strain 168).